The following is a 508-amino-acid chain: MGKKKTSVVQSDELPVIEFRYAEPLFQFVCHPEEPMVVSALATGHVLCHRYDAELLTEKLREARKVQEAVKVEEKKQTLWTVVDVDAADKHPVLPSGVTLLWRTKRHKGSVRALAIDHDGKHVYTIGADNVLKKADTHSGKVVKKVTLDGGSKVTKLVKSATHDFLVMGDEVGTIVVLDSNDLTTKNTLTKIHGGDAINDIFQFCKRSVYKYISLGQTTLAYWDTREPKMKQPKKNSGNQTEEELSNIMCSDDQEDEILCGAFVDPIEGDTLVCGMGEGTLTVWKPKKNDLEDQLTRVKIAKGESIDTVISTLQDDNCVWCGCSNGLLYKVDTKRGKIVEIRKHSGLDEVGMLDLDFEYRLVSGGMDKLKIWEVPKEENSDSDSDSDINDDSEAGLSSSEDSDSDSELGSGSESEVESDASSKSDSDLEECTGSDLPGDIEGSEGENNSNDDDNHDDREELWKELDQPTSDEEEPPKKRSLKVKDKKNKKFKKNENNLSHGITKFDGL.

WD repeat units follow at residues 62–105 (EARK…WRTK), 106–145 (RHKG…VVKK), 149–188 (DGGS…TKNT), 193–233 (HGGD…MKQP), 253–294 (DQED…LEDQ), and 345–382 (SGLD…NSDS). A disordered region spans residues 376–508 (KEENSDSDSD…SHGITKFDGL (133 aa)). The segment covering 380 to 393 (SDSDSDSDINDDSE) has biased composition (acidic residues). Residues 407–419 (ELGSGSESEVESD) show a composition bias toward low complexity. The WD 7 repeat unit spans residues 431-472 (CTGSDLPGDIEGSEGENNSNDDDNHDDREELWKELDQPTSDE). Over residues 441 to 454 (EGSEGENNSNDDDN) the composition is skewed to acidic residues. Positions 455–466 (HDDREELWKELD) are enriched in basic and acidic residues. A compositionally biased stretch (basic residues) spans 478–492 (KRSLKVKDKKNKKFK).

It belongs to the WD repeat WDR55 family.

It is found in the nucleus. The protein localises to the nucleolus. The polypeptide is WD repeat-containing protein JIP5 (JIP5) (Candida glabrata (strain ATCC 2001 / BCRC 20586 / JCM 3761 / NBRC 0622 / NRRL Y-65 / CBS 138) (Yeast)).